A 346-amino-acid polypeptide reads, in one-letter code: S-adenosylmethionine:tRNA ribosyltransferase-isomerase (346 aa).

It belongs to the QueA family. Monomer.

The protein resides in the cytoplasm. It catalyses the reaction 7-aminomethyl-7-carbaguanosine(34) in tRNA + S-adenosyl-L-methionine = epoxyqueuosine(34) in tRNA + adenine + L-methionine + 2 H(+). It participates in tRNA modification; tRNA-queuosine biosynthesis. Its function is as follows. Transfers and isomerizes the ribose moiety from AdoMet to the 7-aminomethyl group of 7-deazaguanine (preQ1-tRNA) to give epoxyqueuosine (oQ-tRNA). The chain is S-adenosylmethionine:tRNA ribosyltransferase-isomerase from Neisseria gonorrhoeae (strain ATCC 700825 / FA 1090).